We begin with the raw amino-acid sequence, 367 residues long: MEVKSAKELKRISKELQENFLNRWKLLNLEQDKDRLKSLTEKAEDPNLWNNPEEARLVSQKKNELEKKLNPWFTIQQDILDFPDLVDLTLDEKGENGVGELSSEYNRLQEKFEELELLGALKNPEDLKPAFLNIHPGAGGTESQDWAEMLLRMYTRYFEKKGYQYSLIDVQAGDGAGIKNATLHVIGDFAFGFLKGENGVHRLVRISPFDANKRRHTSFVSVHVSPEIDDDIDIKIEEKDIRVDVYRSSGAGGQHVNTTDSAVRITHMPSGIVVACQNERSQIKNRDTAFKMLKARLYELEQEKAKEELEKKSGEKKDIAWGSQIRSYVFHPYNLVKDHRTDHETGNVAAVMDGDIEPFILAYLKTL.

Glutamine 254 carries the post-translational modification N5-methylglutamine.

It belongs to the prokaryotic/mitochondrial release factor family. Methylated by PrmC. Methylation increases the termination efficiency of RF2.

It is found in the cytoplasm. Peptide chain release factor 2 directs the termination of translation in response to the peptide chain termination codons UGA and UAA. The sequence is that of Peptide chain release factor 2 from Leptospira interrogans serogroup Icterohaemorrhagiae serovar Lai (strain 56601).